We begin with the raw amino-acid sequence, 113 residues long: MSESNRKSYTDFNVELLEKEKQKKKLKKPDRYKVILINDDYTPQEFVVYVLAVVFRKSMDESRQIMWRAHTEGSAVCGVYSLDIARTKVAEVHKLADDAGHPLQCQLAKEEEE.

It belongs to the ClpS family. In terms of assembly, binds to the N-terminal domain of the chaperone ClpA.

Functionally, involved in the modulation of the specificity of the ClpAP-mediated ATP-dependent protein degradation. The chain is ATP-dependent Clp protease adapter protein ClpS from Leptospira biflexa serovar Patoc (strain Patoc 1 / Ames).